The following is a 298-amino-acid chain: 4-hydroxy-tetrahydrodipicolinate synthase (298 aa).

Thr-48 serves as a coordination point for pyruvate. The active-site Proton donor/acceptor is Tyr-137. The active-site Schiff-base intermediate with substrate is Lys-166. Residue Ile-207 participates in pyruvate binding.

Belongs to the DapA family. Homotetramer; dimer of dimers.

The protein localises to the cytoplasm. The enzyme catalyses L-aspartate 4-semialdehyde + pyruvate = (2S,4S)-4-hydroxy-2,3,4,5-tetrahydrodipicolinate + H2O + H(+). Its pathway is amino-acid biosynthesis; L-lysine biosynthesis via DAP pathway; (S)-tetrahydrodipicolinate from L-aspartate: step 3/4. Catalyzes the condensation of (S)-aspartate-beta-semialdehyde [(S)-ASA] and pyruvate to 4-hydroxy-tetrahydrodipicolinate (HTPA). The sequence is that of 4-hydroxy-tetrahydrodipicolinate synthase from Campylobacter jejuni subsp. jejuni serotype O:2 (strain ATCC 700819 / NCTC 11168).